A 271-amino-acid polypeptide reads, in one-letter code: DNA repair protein RecO (271 aa).

The protein belongs to the RecO family.

Involved in DNA repair and RecF pathway recombination. The polypeptide is DNA repair protein RecO (Synechococcus sp. (strain CC9311)).